The chain runs to 279 residues: Acetylglutamate kinase (279 aa).

Residues 64–65, R86, and N177 contribute to the substrate site; that span reads GG.

This sequence belongs to the acetylglutamate kinase family. ArgB subfamily.

The protein localises to the cytoplasm. The catalysed reaction is N-acetyl-L-glutamate + ATP = N-acetyl-L-glutamyl 5-phosphate + ADP. Its pathway is amino-acid biosynthesis; L-arginine biosynthesis; N(2)-acetyl-L-ornithine from L-glutamate: step 2/4. Catalyzes the ATP-dependent phosphorylation of N-acetyl-L-glutamate. The chain is Acetylglutamate kinase from Campylobacter jejuni subsp. doylei (strain ATCC BAA-1458 / RM4099 / 269.97).